The primary structure comprises 259 residues: Insulin-induced gene 1 protein (259 aa).

Residues 1–66 (MPRLHDHVWS…ARPGSWHHDL (66 aa)) are Cytoplasmic-facing. Positions 33-57 (PQGPGAPEPEPAPRGQREGTAGFSA) are disordered. The chain crosses the membrane as a helical span at residues 67–89 (VQRSLVLFSFGVVLALVLNLLQI). Residues 90–108 (QRNVTLFPDEVIATIFSSA) lie on the Extracellular side of the membrane. The chain crosses the membrane as a helical span at residues 109–126 (WWVPPCCGTAAAVVGLLY). Topologically, residues 127–141 (PCIDSHLGEPHKFKR) are cytoplasmic. Residues Lys-138 and Lys-140 each participate in a glycyl lysine isopeptide (Lys-Gly) (interchain with G-Cter in ubiquitin) cross-link. The helical transmembrane segment at 142-164 (EWASVMRCIAVFVGINHASAKLD) threads the bilayer. Residues 165 to 167 (FAN) lie on the Extracellular side of the membrane. A helical membrane pass occupies residues 168–186 (NVQLSLTLAALSLGLWWTF). The Cytoplasmic segment spans residues 187-191 (DRSRS). A Phosphoserine modification is found at Ser-189. A helical transmembrane segment spans residues 192–213 (GLGLGITIAFLATLITQFLVYN). The Extracellular portion of the chain corresponds to 214–227 (GVYQYTSPDFLYIR). The chain crosses the membrane as a helical span at residues 228 to 245 (SWLPCIFFSGGVTVGNIG). At 246–259 (RQLAMGVPEKPHSD) the chain is on the cytoplasmic side. The KxHxx motif lies at 253–259 (PEKPHSD).

It belongs to the INSIG family. In terms of assembly, interacts with SCAP; interaction is direct and only takes place in the presence of sterols; it prevents interaction between SCAP and the coat protein complex II (COPII). Associates with the SCAP-SREBP complex (composed of SCAP and SREBF1/SREBP1 or SREBF2/SREBP2); association is mediated via its interaction with SCAP and only takes place in the presence of sterols. Interaction with SCAP is mutually exclusive with PAQR3. Interacts with HMGCR (via its SSD); the interaction, accelerated by sterols, leads to the recruitment of HMGCR to AMFR/gp78 for its ubiquitination by the sterol-mediated ERAD pathway. Interacts with AMFR/gp78 (via its membrane domain); the interaction recruits HMCR at the ER membrane for its ubiquitination and degradation by the sterol-mediated ERAD pathway. Interacts with SOAT2/ACAT2; leading to promote recruitment of AMFR/gp78 and subsequent ubiquitination of SOAT2/ACAT2. Interacts with RNF139. Interacts with RNF145. Phosphorylation at Ser-189 by PCK1 reduces binding to oxysterol, disrupting the interaction between INSIG1 and SCAP, thereby promoting nuclear translocation of SREBP proteins (SREBF1/SREBP1 or SREBF2/SREBP2) and subsequent transcription of downstream lipogenesis-related genes. In terms of processing, ubiquitinated by AMFR/gp78 in response to sterol deprivation, leading to its degradation: when the SCAP-SREBP complex becomes dissociated from INSIG1, INSIG1 is then ubiquitinated and degraded in proteasomes. Although ubiquitination is required for rapid INSIG1 degradation, it is not required for release of the SCAP-SREBP complex. Ubiquitinated by RNF139. Highly expressed in liver and kidney.

It is found in the endoplasmic reticulum membrane. Its function is as follows. Oxysterol-binding protein that mediates feedback control of cholesterol synthesis by controlling both endoplasmic reticulum to Golgi transport of SCAP and degradation of HMGCR. Acts as a negative regulator of cholesterol biosynthesis by mediating the retention of the SCAP-SREBP complex in the endoplasmic reticulum, thereby blocking the processing of sterol regulatory element-binding proteins (SREBPs) SREBF1/SREBP1 and SREBF2/SREBP2. Binds oxysterol, including 25-hydroxycholesterol, regulating interaction with SCAP and retention of the SCAP-SREBP complex in the endoplasmic reticulum. In presence of oxysterol, interacts with SCAP, retaining the SCAP-SREBP complex in the endoplasmic reticulum, thereby preventing SCAP from escorting SREBF1/SREBP1 and SREBF2/SREBP2 to the Golgi. Sterol deprivation or phosphorylation by PCK1 reduce oxysterol-binding, disrupting the interaction between INSIG1 and SCAP, thereby promoting Golgi transport of the SCAP-SREBP complex, followed by processing and nuclear translocation of SREBF1/SREBP1 and SREBF2/SREBP2. Also regulates cholesterol synthesis by regulating degradation of HMGCR: initiates the sterol-mediated ubiquitin-mediated endoplasmic reticulum-associated degradation (ERAD) of HMGCR via recruitment of the reductase to the ubiquitin ligases AMFR/gp78 and/or RNF139. Also regulates degradation of SOAT2/ACAT2 when the lipid levels are low: initiates the ubiquitin-mediated degradation of SOAT2/ACAT2 via recruitment of the ubiquitin ligases AMFR/gp78. The sequence is that of Insulin-induced gene 1 protein from Rattus norvegicus (Rat).